A 360-amino-acid chain; its full sequence is MKKTLAALIVGAFAASAANAAVVYNNEGTNVELGGRLSVIAEQSNSTRKDQKQQHGELRNAGSRFHIKATHNFGDGFYAQGYLETRLVSDYQSSSDNFGNIITKYAYVTLGNKGFGEVKLGRAKTISDGITSAEDKEYGVLENKEYIPKDGNSVGYTFKGIDGLVLGANYLLAQKREAYKTATATPGEVIAQVISNGVQVGAKYDANNIIAGIAYGRTNYREDLATQDKSGKKQQVNGALSTLGYRFSDLGLLVSLDSGYAKTKNYKDKHEKRYFVSPGFQYELMEDTNVYGNFKYERNSVDQGKKAREHAVLFGVDHKLHKQVLTYIEGAYARTRTNDKGKTEKTEKEKSVGVGLRVYF.

Positions 1-20 (MKKTLAALIVGAFAASAANA) are cleaved as a signal peptide.

Belongs to the Gram-negative porin family. Homotrimer.

The protein localises to the cell outer membrane. Forms pores that allow passive diffusion of small molecules across the outer membrane. The chain is Outer membrane protein P2 (ompP2) from Haemophilus influenzae.